The sequence spans 440 residues: Guanine/hypoxanthine permease PbuG (440 aa).

13 helical membrane-spanning segments follow: residues 18–38 (IIGGLTTFLSMAYILFVNPIT), 57–77 (AVFTATALASAAGCILMGLIA), 81–101 (IAIAPGMGLNAFFAFSVVLGM), 107–127 (AALSGVFISGLIFVALSLTGF), 142–162 (AVGAGIGLFITFVGLQGSGII), 175–195 (IHSGPVLLTIFGVIVTVILMV), 201–221 (GVFIGMLLTAVAGMIFGLVPV), 251–271 (MLIVILTFLFVGFFDTAGTLV), 291–311 (ALLADSSSIVIGAVLGTSTTT), 327–347 (GFAAIVTGILFLLATFFSPLL), 354–374 (VTAPALIIVGALMVAPLGKIA), 388–408 (MIMMPLTYSIATGIAIGFIFY), and 419–439 (KEVHPIMYGLFVVFILYFIFL).

Belongs to the nucleobase:cation symporter-2 (NCS2) (TC 2.A.40) family. Azg-like subfamily.

Its subcellular location is the cell membrane. In terms of biological role, involved in the uptake of the purine bases hypoxanthine and guanine. The chain is Guanine/hypoxanthine permease PbuG (pbuG) from Bacillus subtilis (strain 168).